We begin with the raw amino-acid sequence, 465 residues long: MSNVTVCARFRPRSSKEMRDPSRDGVCARPIDAETFVFQDDKEDEFTFSLDRVFYEDSTQAAVYEFLALPIMRDAVNGINGTIITYGQTGAGKTYSMEGPGIQDCDEHNKGLLPRVVHGMFEQISSSNDIARYTVKLSMVEIYMEKVRDLLDLSKANIQIKENKTQGILLSGVTEVPVSDSVEALQHLCTGLANRAVGETQMNMSSSRSHCAYLFTIQQDSVKDKRVKTGKLILVDLAGSEKADKTGAEGRVLEEAKTINKSLSALGNVINALTSGPSSKGNHIPYRDSKLTRILQDALGGNSRMALLCCCSPSTLNASETLSTLRFGMRAKHIKASPRASEVKSAKAQEEPSSVTKDEKCGRILEKMKERMSNEDIKMLEDVFIQEGIIFSLDSMAEVETVYEDIVSKTIQSLQQAVDELQQKVKKLEAENIGIQEQALRNHEPGSVGKMSRFISSWYASFFTS.

Residues 3 to 334 enclose the Kinesin motor domain; the sequence is NVTVCARFRP…LRFGMRAKHI (332 aa). Residue 87-94 coordinates ATP; sequence GQTGAGKT. Residues 338 to 358 form a disordered region; the sequence is PRASEVKSAKAQEEPSSVTKD. Positions 341-358 are enriched in basic and acidic residues; the sequence is SEVKSAKAQEEPSSVTKD. Positions 402–444 form a coiled coil; the sequence is VYEDIVSKTIQSLQQAVDELQQKVKKLEAENIGIQEQALRNHE.

Belongs to the TRAFAC class myosin-kinesin ATPase superfamily. Kinesin family. KIN-1 subfamily. In terms of assembly, homodimer. Interacts with WIP1 and WIP2. Specifically expressed in ovules and anthers.

In terms of biological role, kinesin-like motor protein that promotes synapsis and is required for proper crossover distribution in meiosis. Plays a role in the nuclear division cycles during megagametogenesis. This chain is Kinesin-like protein KIN-1, found in Arabidopsis thaliana (Mouse-ear cress).